Here is a 313-residue protein sequence, read N- to C-terminus: Protoheme IX farnesyltransferase (313 aa).

9 consecutive transmembrane segments (helical) span residues 35–55, 56–76, 98–118, 120–140, 153–173, 180–200, 226–246, 248–268, and 285–305; these read LVIF…HPVL, AFTS…LNMW, VSKP…VVTL, ILVN…YVVI, IVIG…AAAG, MLLF…LALF, ILLY…LGYF, AIYG…TLRV, and FKFS…EVIV.

It belongs to the UbiA prenyltransferase family. Protoheme IX farnesyltransferase subfamily.

It is found in the cell inner membrane. It catalyses the reaction heme b + (2E,6E)-farnesyl diphosphate + H2O = Fe(II)-heme o + diphosphate. It functions in the pathway porphyrin-containing compound metabolism; heme O biosynthesis; heme O from protoheme: step 1/1. In terms of biological role, converts heme B (protoheme IX) to heme O by substitution of the vinyl group on carbon 2 of heme B porphyrin ring with a hydroxyethyl farnesyl side group. In Rhodopseudomonas palustris (strain BisB18), this protein is Protoheme IX farnesyltransferase.